The chain runs to 519 residues: Maturase K (519 aa).

Belongs to the intron maturase 2 family. MatK subfamily.

The protein resides in the plastid. It is found in the chloroplast. Its function is as follows. Usually encoded in the trnK tRNA gene intron. Probably assists in splicing its own and other chloroplast group II introns. This is Maturase K from Dioscorea elephantipes (Elephant's foot yam).